The sequence spans 213 residues: Pyridoxine/pyridoxamine 5'-phosphate oxidase (213 aa).

FMN-binding positions include 57-62, 77-78, Arg-83, Lys-84, and Gln-106; these read RIVLLR and FT. Position 62 (Arg-62) interacts with substrate. Substrate-binding residues include Tyr-124, Arg-128, and Ser-132. Residues 135–163 are disordered; sequence GARASDQSRPLPDRKTLQKRVEEEEARYP. 141–142 contributes to the FMN binding site; the sequence is QS. Basic and acidic residues predominate over residues 145-163; sequence LPDRKTLQKRVEEEEARYP. FMN is bound at residue Trp-186. 192–194 provides a ligand contact to substrate; sequence RLH. FMN is bound at residue Arg-196.

The protein belongs to the pyridoxamine 5'-phosphate oxidase family. Homodimer. FMN is required as a cofactor.

It carries out the reaction pyridoxamine 5'-phosphate + O2 + H2O = pyridoxal 5'-phosphate + H2O2 + NH4(+). It catalyses the reaction pyridoxine 5'-phosphate + O2 = pyridoxal 5'-phosphate + H2O2. The protein operates within cofactor metabolism; pyridoxal 5'-phosphate salvage; pyridoxal 5'-phosphate from pyridoxamine 5'-phosphate: step 1/1. Its pathway is cofactor metabolism; pyridoxal 5'-phosphate salvage; pyridoxal 5'-phosphate from pyridoxine 5'-phosphate: step 1/1. Its function is as follows. Catalyzes the oxidation of either pyridoxine 5'-phosphate (PNP) or pyridoxamine 5'-phosphate (PMP) into pyridoxal 5'-phosphate (PLP). The chain is Pyridoxine/pyridoxamine 5'-phosphate oxidase from Granulibacter bethesdensis (strain ATCC BAA-1260 / CGDNIH1).